The primary structure comprises 245 residues: tRNA (guanine-N(1)-)-methyltransferase (245 aa).

Residues glycine 111 and 131–136 (MGDYVL) contribute to the S-adenosyl-L-methionine site.

Belongs to the RNA methyltransferase TrmD family. In terms of assembly, homodimer.

Its subcellular location is the cytoplasm. The enzyme catalyses guanosine(37) in tRNA + S-adenosyl-L-methionine = N(1)-methylguanosine(37) in tRNA + S-adenosyl-L-homocysteine + H(+). Functionally, specifically methylates guanosine-37 in various tRNAs. In Staphylococcus epidermidis (strain ATCC 35984 / DSM 28319 / BCRC 17069 / CCUG 31568 / BM 3577 / RP62A), this protein is tRNA (guanine-N(1)-)-methyltransferase.